Consider the following 428-residue polypeptide: Adenylosuccinate synthetase (428 aa).

GTP-binding positions include 12-18 (GDEGKGK) and 40-42 (GHT). Catalysis depends on Asp13, which acts as the Proton acceptor. Asp13 and Gly40 together coordinate Mg(2+). IMP-binding positions include 13 to 16 (DEGK), 38 to 41 (NAGH), Thr128, Arg142, Gln223, Thr238, and Arg302. The Proton donor role is filled by His41. 298-304 (TTTGRPR) provides a ligand contact to substrate. Residues Arg304, 330 to 332 (SID), and 412 to 414 (SVG) contribute to the GTP site.

Belongs to the adenylosuccinate synthetase family. As to quaternary structure, homodimer. It depends on Mg(2+) as a cofactor.

The protein localises to the cytoplasm. The catalysed reaction is IMP + L-aspartate + GTP = N(6)-(1,2-dicarboxyethyl)-AMP + GDP + phosphate + 2 H(+). It participates in purine metabolism; AMP biosynthesis via de novo pathway; AMP from IMP: step 1/2. Its function is as follows. Plays an important role in the de novo pathway of purine nucleotide biosynthesis. Catalyzes the first committed step in the biosynthesis of AMP from IMP. This chain is Adenylosuccinate synthetase, found in Streptococcus pneumoniae serotype 2 (strain D39 / NCTC 7466).